A 379-amino-acid chain; its full sequence is Neutral protease 2 homolog TRV_03208 (379 aa).

The signal sequence occupies residues 1–19 (MKFFTALAAVGALLAPALA). The propeptide occupies 20 to 187 (LPTPASEEAS…DYFSKSLDKR (168 aa)). Disulfide bonds link Cys-193–Cys-263 and Cys-270–Cys-288. Asn-221 carries an N-linked (GlcNAc...) asparagine glycan. His-312 is a Zn(2+) binding site. Residue Glu-313 is part of the active site. Zn(2+) contacts are provided by His-316 and Asp-327.

The protein belongs to the peptidase M35 family. Zn(2+) serves as cofactor.

It localises to the secreted. It catalyses the reaction Preferential cleavage of bonds with hydrophobic residues in P1'. Also 3-Asn-|-Gln-4 and 8-Gly-|-Ser-9 bonds in insulin B chain.. Its function is as follows. Secreted metalloproteinase that allows assimilation of proteinaceous substrates. Shows high activities on basic nuclear substrates such as histone and protamine. May be involved in virulence. This is Neutral protease 2 homolog TRV_03208 from Trichophyton verrucosum (strain HKI 0517).